Here is a 514-residue protein sequence, read N- to C-terminus: 2,3-bisphosphoglycerate-independent phosphoglycerate mutase (514 aa).

Asp14 and Ser64 together coordinate Mn(2+). Catalysis depends on Ser64, which acts as the Phosphoserine intermediate. Substrate-binding positions include His125, 155 to 156 (RD), Arg187, Arg193, 263 to 266 (RADR), and Lys336. Mn(2+) is bound by residues Asp403, His407, Asp444, His445, and His463.

It belongs to the BPG-independent phosphoglycerate mutase family. As to quaternary structure, monomer. The cofactor is Mn(2+).

It catalyses the reaction (2R)-2-phosphoglycerate = (2R)-3-phosphoglycerate. The protein operates within carbohydrate degradation; glycolysis; pyruvate from D-glyceraldehyde 3-phosphate: step 3/5. In terms of biological role, catalyzes the interconversion of 2-phosphoglycerate and 3-phosphoglycerate. The polypeptide is 2,3-bisphosphoglycerate-independent phosphoglycerate mutase (Shewanella halifaxensis (strain HAW-EB4)).